Here is a 137-residue protein sequence, read N- to C-terminus: Large ribosomal subunit protein uL16 (137 aa).

Belongs to the universal ribosomal protein uL16 family. As to quaternary structure, part of the 50S ribosomal subunit.

Its function is as follows. Binds 23S rRNA and is also seen to make contacts with the A and possibly P site tRNAs. The protein is Large ribosomal subunit protein uL16 of Spiroplasma citri.